Here is a 350-residue protein sequence, read N- to C-terminus: Dihydroorotate dehydrogenase (quinone) (350 aa).

Residues 65–69 and Thr-89 contribute to the FMN site; that span reads AGLDK. Lys-69 provides a ligand contact to substrate. Residue 114–118 coordinates substrate; the sequence is NRLGF. Residues Asn-149 and Asn-182 each contribute to the FMN site. Asn-182 contributes to the substrate binding site. The Nucleophile role is filled by Ser-185. A substrate-binding site is contributed by Asn-187. FMN contacts are provided by Lys-227 and Thr-255. Residue 256–257 participates in substrate binding; that stretch reads NT. Residues Gly-278, Gly-307, and 328–329 contribute to the FMN site; that span reads YT.

This sequence belongs to the dihydroorotate dehydrogenase family. Type 2 subfamily. Monomer. The cofactor is FMN.

Its subcellular location is the cell membrane. It carries out the reaction (S)-dihydroorotate + a quinone = orotate + a quinol. Its pathway is pyrimidine metabolism; UMP biosynthesis via de novo pathway; orotate from (S)-dihydroorotate (quinone route): step 1/1. Its function is as follows. Catalyzes the conversion of dihydroorotate to orotate with quinone as electron acceptor. In Polaromonas naphthalenivorans (strain CJ2), this protein is Dihydroorotate dehydrogenase (quinone).